A 280-amino-acid chain; its full sequence is Large ribosomal subunit protein uL2cz/uL2cy (280 aa).

Disordered stretches follow at residues 1-25 (MAIH…VKSN) and 231-280 (PVDH…RRTK).

This sequence belongs to the universal ribosomal protein uL2 family. As to quaternary structure, part of the 50S ribosomal subunit.

It localises to the plastid. It is found in the chloroplast. The sequence is that of Large ribosomal subunit protein uL2cz/uL2cy (rpl2-A) from Platanus occidentalis (Sycamore).